A 522-amino-acid chain; its full sequence is MSRWKVVILCLLSFMFEIGHASFQCNPKTYDGAFLNIVCVCNATFCDEIEPIGEIAEGKAIVYRSSLDGDRLKRMSMKMKEKLRKNESVNVTITIDASERFQNIFGFGGAFTDSAGDQFVSLSETLQNYIVDSYFGKNGLEYNIGRVPIASCDFSTHEYSYDDVHDDFELKHFALPDEDLKLKIPFIKKAIEKTEGNIQLFASPWSAPGWMKVTGRMRGGGAMRNDKRVYQAYADYFFKFFEAYSSHAITFWGLTIQNEPSTGADMAWRWQTMNYTAETMRDFLKKYLGPKLKENKLTETLKVMVLDDGRGLLPGWADTIFNDPEATKYADGVAVHWYGNLYSPAVLLDITQRHHPTKFIFGTEACAGYFGHHGPIMGDWFRAESYADDIITDLNHHVTGWTDWNLCLDETGGPNWAYNVVDSPIIVNRTAQEFYKQPMFYALGHFSKFLPRGSTRVFTKIEGNLAVSATSVVIEGGRRATVILSKASNSLLTRIVDSSTGFSIVLNLPPRSIHTVIWKKRK.

A signal peptide spans 1–21 (MSRWKVVILCLLSFMFEIGHA). The active-site Proton donor is Glu-259. Catalysis depends on Glu-364, which acts as the Nucleophile.

This sequence belongs to the glycosyl hydrolase 30 family.

It carries out the reaction a beta-D-glucosylceramide + H2O = an N-acyl-sphingoid base + D-glucose. It catalyses the reaction a beta-D-glucosyl-(1&lt;-&gt;1')-N-acylsphing-4-enine + H2O = an N-acylsphing-4-enine + D-glucose. The catalysed reaction is an N-acyl-1-beta-D-glucosyl-15-methylhexadecasphing-4-enine + H2O = an N-acyl-15-methylhexadecasphing-4-enine + D-glucose. Its pathway is lipid metabolism; sphingolipid metabolism. Functionally, glucosylceramidase that catalyzes the hydrolysis of glucosylceramides into free ceramides and glucose. C.elegans contain specific sphingoid bases, which are unique or different in structure compared to the sphingoid bases found in other animals. Two examples of these distinctive compounds are: 15-methylhexadecasphinganine and 15-methylhexadecasphing-4-enine. This chain is Putative glucosylceramidase 3, found in Caenorhabditis elegans.